We begin with the raw amino-acid sequence, 559 residues long: Arginine--tRNA ligase (559 aa).

Residues 116 to 126 carry the 'HIGH' region motif; sequence ANPNGPLHVGH.

It belongs to the class-I aminoacyl-tRNA synthetase family.

The protein localises to the cytoplasm. It catalyses the reaction tRNA(Arg) + L-arginine + ATP = L-arginyl-tRNA(Arg) + AMP + diphosphate. The chain is Arginine--tRNA ligase from Methanosphaerula palustris (strain ATCC BAA-1556 / DSM 19958 / E1-9c).